Reading from the N-terminus, the 421-residue chain is Proton/sodium-glutamate symport protein (421 aa).

Residues 1–3 are Cytoplasmic-facing; it reads MRK. The chain crosses the membrane as a helical span at residues 4–24; that stretch reads IGLAWQIFIGLILGIIVGAIF. The Extracellular segment spans residues 25–43; the sequence is YGNPKVATYLQPIGDIFLR. The chain crosses the membrane as a helical span at residues 44–64; sequence LIKMIVIPIVISSLVVGVASV. Topologically, residues 65 to 77 are cytoplasmic; it reads GDLKKLGKLGGKT. A helical membrane pass occupies residues 78–98; it reads IIYFEIITTIAIVVGLLAANI. The Extracellular segment spans residues 99–148; it reads FQPGTGVNMKSLEKTDIQSYVDTTNEVQHHSMVETFVNIVPKNIFESLTK. A helical transmembrane segment spans residues 149-169; the sequence is GDMLPIIFFSVMFGLGVAAIG. The Cytoplasmic portion of the chain corresponds to 170–198; it reads EKGKPVLQFFQGTAEAMFYVTNQIMKFAP. A helical transmembrane segment spans residues 199-219; sequence FGVFALIGVTVSKFGVESLIP. Over 220–222 the chain is Extracellular; sequence LSK. Residues 223 to 243 traverse the membrane as a helical segment; the sequence is LVIVVYATMVFFIFVVLGGVA. Residue lysine 244 is a topological domain, cytoplasmic. The chain crosses the membrane as a helical span at residues 245-265; it reads LFGINIFHIIKILKDELILAY. At 266-306 the chain is on the extracellular side; the sequence is STASSETVLPKIMEKMENFGCPKAITSFVIPTGYSFNLDGS. The chain crosses the membrane as a helical span at residues 307-327; that stretch reads TLYQALAAIFIAQLYGIDMPI. At 328-330 the chain is on the cytoplasmic side; sequence SQQ. Helical transmembrane passes span 331–351 and 352–372; these read ISLL…PGVS and FVVL…LAFI. Residues 373 to 421 lie on the Cytoplasmic side of the membrane; the sequence is AGIDRILDMARTAVNVIGNSLAAIIMSKWEGQYNEEKGKQYIAQLQQSA.

This sequence belongs to the dicarboxylate/amino acid:cation symporter (DAACS) (TC 2.A.23) family. Homotrimer.

Its subcellular location is the cell membrane. This carrier protein is part of the Na(+)-dependent, binding-protein-independent glutamate-aspartate transport system. The chain is Proton/sodium-glutamate symport protein (gltT) from Geobacillus stearothermophilus (Bacillus stearothermophilus).